We begin with the raw amino-acid sequence, 388 residues long: F-box/kelch-repeat protein At3g17530 (388 aa).

Positions 1 to 50 (MMISDLPHDLESEILSRVPAKSLAKWKTTCKRWYALFRDPSFVKKNFDKA) constitute an F-box domain. Kelch repeat units follow at residues 163 to 208 (CCYY…VSLK) and 336 to 383 (RIYI…AEEN).

In Arabidopsis thaliana (Mouse-ear cress), this protein is F-box/kelch-repeat protein At3g17530.